A 611-amino-acid polypeptide reads, in one-letter code: Elongation factor 4 (611 aa).

Positions 12 to 194 constitute a tr-type G domain; it reads SRIRNFSIIA…QIVEKVPAPA (183 aa). GTP-binding positions include 24–29 and 141–144; these read DHGKST and NKID.

The protein belongs to the TRAFAC class translation factor GTPase superfamily. Classic translation factor GTPase family. LepA subfamily.

It localises to the cell membrane. The catalysed reaction is GTP + H2O = GDP + phosphate + H(+). Its function is as follows. Required for accurate and efficient protein synthesis under certain stress conditions. May act as a fidelity factor of the translation reaction, by catalyzing a one-codon backward translocation of tRNAs on improperly translocated ribosomes. Back-translocation proceeds from a post-translocation (POST) complex to a pre-translocation (PRE) complex, thus giving elongation factor G a second chance to translocate the tRNAs correctly. Binds to ribosomes in a GTP-dependent manner. The protein is Elongation factor 4 of Bacillus velezensis (strain DSM 23117 / BGSC 10A6 / LMG 26770 / FZB42) (Bacillus amyloliquefaciens subsp. plantarum).